The primary structure comprises 535 residues: uncharacterized protein (535 aa).

2 consecutive transmembrane segments (helical) span residues 7-27 (DFDV…AYLA) and 509-529 (GGAV…ACLA).

It localises to the cell membrane. This is an uncharacterized protein from Mycobacterium bovis (strain ATCC BAA-935 / AF2122/97).